Reading from the N-terminus, the 321-residue chain is Putative sulfotransferase vep-2 (321 aa).

A helical membrane pass occupies residues 11 to 31; the sequence is IARVLIIIASISVICITLFIS.

To C.elegans C41C4.1 and C18B2.2.

It is found in the membrane. This Caenorhabditis elegans protein is Putative sulfotransferase vep-2.